A 314-amino-acid chain; its full sequence is Formylglycine-generating enzyme (314 aa).

The span at 1–20 (MAVAAPSPAAAAEPGPAARP) shows a compositional bias: low complexity. Residues 1–31 (MAVAAPSPAAAAEPGPAARPRSTRGQVRLPG) are disordered. 4 residues coordinate Ca(2+): asparagine 194, isoleucine 195, aspartate 208, and histidine 210. 2 residues coordinate Cu(2+): cysteine 272 and cysteine 277.

The protein belongs to the sulfatase-modifying factor family. Cu(2+) serves as cofactor.

It carries out the reaction L-cysteinyl-[sulfatase] + 2 a thiol + O2 = an organic disulfide + 3-oxo-L-alanyl-[sulfatase] + hydrogen sulfide + H2O + H(+). It participates in protein modification; sulfatase oxidation. In terms of biological role, oxidase that catalyzes the conversion of cysteine to 3-oxoalanine on target proteins. 3-oxoalanine modification, which is also named formylglycine (fGly), occurs in the maturation of arylsulfatases and some alkaline phosphatases that use the hydrated form of 3-oxoalanine as a catalytic nucleophile. The protein is Formylglycine-generating enzyme of Streptomyces coelicolor (strain ATCC BAA-471 / A3(2) / M145).